A 196-amino-acid chain; its full sequence is Putative acetyltransferase YJL218W (196 aa).

Acetyl-CoA is bound at residue N84. H114 acts as the Proton donor/acceptor in catalysis. Residues G141, A159, 164 to 165, K179, and R182 contribute to the acetyl-CoA site; that span reads IR.

Belongs to the transferase hexapeptide repeat family. Homodimer.

The sequence is that of Putative acetyltransferase YJL218W from Saccharomyces cerevisiae (strain ATCC 204508 / S288c) (Baker's yeast).